Here is a 794-residue protein sequence, read N- to C-terminus: Ent-kaurene synthase 1, chloroplastic (794 aa).

The N-terminal 28 residues, 1–28 (MSLLLSNSVLVGPKFRSSRISHASASLD), are a transit peptide targeting the chloroplast. 4 residues coordinate Mg(2+): Asp543, Asp547, Asn687, and Glu695. A DDXXD motif motif is present at residues 543-547 (DDFFD).

This sequence belongs to the terpene synthase family. It depends on Mg(2+) as a cofactor. Accumulates in leaves, and, at low levels, in germinating seeds.

The protein localises to the plastid. It is found in the chloroplast. It catalyses the reaction ent-copalyl diphosphate = ent-kaur-16-ene + diphosphate. The protein operates within secondary metabolite biosynthesis; terpenoid biosynthesis. Its pathway is plant hormone biosynthesis; gibberellin biosynthesis. Functionally, involved in the biosynthesis of ent-kaurene diterpenoids natural products such as oridonin, miltiradiene, eriocalyxin B and nezukol, known to exhibit antitumor, anti-inflammatory and antibacterial activities, and in the production of gibberellins phytohormones. Catalyzes the conversion of ent-copalyl diphosphate (ent-CPP) to ent-kaurene. This chain is Ent-kaurene synthase 1, chloroplastic, found in Isodon eriocalyx (Plectranthus eriocalyx).